A 198-amino-acid chain; its full sequence is Leucyl/phenylalanyl-tRNA--protein transferase (198 aa).

Belongs to the L/F-transferase family.

It localises to the cytoplasm. The enzyme catalyses N-terminal L-lysyl-[protein] + L-leucyl-tRNA(Leu) = N-terminal L-leucyl-L-lysyl-[protein] + tRNA(Leu) + H(+). It carries out the reaction N-terminal L-arginyl-[protein] + L-leucyl-tRNA(Leu) = N-terminal L-leucyl-L-arginyl-[protein] + tRNA(Leu) + H(+). It catalyses the reaction L-phenylalanyl-tRNA(Phe) + an N-terminal L-alpha-aminoacyl-[protein] = an N-terminal L-phenylalanyl-L-alpha-aminoacyl-[protein] + tRNA(Phe). Its function is as follows. Functions in the N-end rule pathway of protein degradation where it conjugates Leu, Phe and, less efficiently, Met from aminoacyl-tRNAs to the N-termini of proteins containing an N-terminal arginine or lysine. The sequence is that of Leucyl/phenylalanyl-tRNA--protein transferase from Synechocystis sp. (strain ATCC 27184 / PCC 6803 / Kazusa).